The following is a 475-amino-acid chain: Glycogen synthase (475 aa).

Lys-15 contacts ADP-alpha-D-glucose.

The protein belongs to the glycosyltransferase 1 family. Bacterial/plant glycogen synthase subfamily.

The enzyme catalyses [(1-&gt;4)-alpha-D-glucosyl](n) + ADP-alpha-D-glucose = [(1-&gt;4)-alpha-D-glucosyl](n+1) + ADP + H(+). It participates in glycan biosynthesis; glycogen biosynthesis. Its function is as follows. Synthesizes alpha-1,4-glucan chains using ADP-glucose. The polypeptide is Glycogen synthase (Anaeromyxobacter dehalogenans (strain 2CP-C)).